Here is an 87-residue protein sequence, read N- to C-terminus: Cytochrome c6 (87 aa).

The heme c site is built by C10, C13, H14, and M56.

This sequence belongs to the cytochrome c family. PetJ subfamily. As to quaternary structure, monomer. Post-translationally, binds 1 heme c group covalently per subunit.

It is found in the plastid. It localises to the chloroplast thylakoid lumen. Its function is as follows. Functions as an electron carrier between membrane-bound cytochrome b6-f and photosystem I in oxygenic photosynthesis. The sequence is that of Cytochrome c6 (petJ) from Euglena gracilis.